A 632-amino-acid polypeptide reads, in one-letter code: 1,4-alpha-glucan branching enzyme GlgB (632 aa).

The active-site Nucleophile is the Asp310. Residue Glu363 is the Proton donor of the active site.

The protein belongs to the glycosyl hydrolase 13 family. GlgB subfamily. In terms of assembly, monomer.

The enzyme catalyses Transfers a segment of a (1-&gt;4)-alpha-D-glucan chain to a primary hydroxy group in a similar glucan chain.. Its pathway is glycan biosynthesis; glycogen biosynthesis. Catalyzes the formation of the alpha-1,6-glucosidic linkages in glycogen by scission of a 1,4-alpha-linked oligosaccharide from growing alpha-1,4-glucan chains and the subsequent attachment of the oligosaccharide to the alpha-1,6 position. The protein is 1,4-alpha-glucan branching enzyme GlgB of Desulfitobacterium hafniense (strain Y51).